The sequence spans 261 residues: 3-methyl-2-oxobutanoate hydroxymethyltransferase (261 aa).

Mg(2+)-binding residues include Asp-47 and Asp-86. 3-methyl-2-oxobutanoate contacts are provided by residues Asp-47–Ser-48, Asp-86, and Lys-116. Residue Glu-118 coordinates Mg(2+). Glu-186 (proton acceptor) is an active-site residue.

The protein belongs to the PanB family. Homodecamer; pentamer of dimers. Mg(2+) serves as cofactor.

It is found in the cytoplasm. The catalysed reaction is 3-methyl-2-oxobutanoate + (6R)-5,10-methylene-5,6,7,8-tetrahydrofolate + H2O = 2-dehydropantoate + (6S)-5,6,7,8-tetrahydrofolate. The protein operates within cofactor biosynthesis; (R)-pantothenate biosynthesis; (R)-pantoate from 3-methyl-2-oxobutanoate: step 1/2. In terms of biological role, catalyzes the reversible reaction in which hydroxymethyl group from 5,10-methylenetetrahydrofolate is transferred onto alpha-ketoisovalerate to form ketopantoate. The sequence is that of 3-methyl-2-oxobutanoate hydroxymethyltransferase from Thermosynechococcus vestitus (strain NIES-2133 / IAM M-273 / BP-1).